The chain runs to 169 residues: Peptide methionine sulfoxide reductase MsrA (169 aa).

Residue cysteine 10 is part of the active site.

This sequence belongs to the MsrA Met sulfoxide reductase family.

The enzyme catalyses L-methionyl-[protein] + [thioredoxin]-disulfide + H2O = L-methionyl-(S)-S-oxide-[protein] + [thioredoxin]-dithiol. The catalysed reaction is [thioredoxin]-disulfide + L-methionine + H2O = L-methionine (S)-S-oxide + [thioredoxin]-dithiol. Functionally, has an important function as a repair enzyme for proteins that have been inactivated by oxidation. Catalyzes the reversible oxidation-reduction of methionine sulfoxide in proteins to methionine. The polypeptide is Peptide methionine sulfoxide reductase MsrA (Streptococcus pyogenes serotype M3 (strain ATCC BAA-595 / MGAS315)).